The following is a 483-amino-acid chain: Betaine aldehyde dehydrogenase (483 aa).

Positions 27 and 93 each coordinate K(+). An NAD(+)-binding site is contributed by 149–151 (GAW). The active-site Charge relay system is the Lys-161. 175-178 (KPSE) serves as a coordination point for NAD(+). Val-179 provides a ligand contact to K(+). 228 to 231 (SVPT) contacts NAD(+). Position 243 (Val-243) interacts with K(+). Glu-249 serves as the catalytic Proton acceptor. Positions 251, 283, and 380 each coordinate NAD(+). Cys-283 serves as the catalytic Nucleophile. Cys-283 carries the cysteine sulfenic acid (-SOH) modification. Residues Lys-450 and Gly-453 each coordinate K(+). Glu-457 acts as the Charge relay system in catalysis.

It belongs to the aldehyde dehydrogenase family. As to quaternary structure, dimer of dimers. K(+) serves as cofactor.

The catalysed reaction is betaine aldehyde + NAD(+) + H2O = glycine betaine + NADH + 2 H(+). The protein operates within amine and polyamine biosynthesis; betaine biosynthesis via choline pathway; betaine from betaine aldehyde: step 1/1. Involved in the biosynthesis of the osmoprotectant glycine betaine. Catalyzes the irreversible oxidation of betaine aldehyde to the corresponding acid. This chain is Betaine aldehyde dehydrogenase, found in Cereibacter sphaeroides (strain ATCC 17029 / ATH 2.4.9) (Rhodobacter sphaeroides).